The primary structure comprises 504 residues: UDP-N-acetylmuramoylalanine--D-glutamate ligase (504 aa).

Gly-132–Thr-138 contributes to the ATP binding site. The tract at residues Ala-284 to Gly-310 is disordered.

Belongs to the MurCDEF family.

The protein resides in the cytoplasm. The enzyme catalyses UDP-N-acetyl-alpha-D-muramoyl-L-alanine + D-glutamate + ATP = UDP-N-acetyl-alpha-D-muramoyl-L-alanyl-D-glutamate + ADP + phosphate + H(+). Its pathway is cell wall biogenesis; peptidoglycan biosynthesis. In terms of biological role, cell wall formation. Catalyzes the addition of glutamate to the nucleotide precursor UDP-N-acetylmuramoyl-L-alanine (UMA). This chain is UDP-N-acetylmuramoylalanine--D-glutamate ligase, found in Paraburkholderia phymatum (strain DSM 17167 / CIP 108236 / LMG 21445 / STM815) (Burkholderia phymatum).